Reading from the N-terminus, the 518-residue chain is Triacylglycerol lipase OBL1 (518 aa).

The helical transmembrane segment at 93-113 threads the bilayer; that stretch reads GFVVDFFLNLFSANGGFFGLL. The GXSXG signature appears at 337–341; sequence GHSLG. The active-site Nucleophile is Ser339. Catalysis depends on charge relay system residues Asp403 and His496.

The protein belongs to the AB hydrolase superfamily. Lipase family. In terms of tissue distribution, expressed in pollen grains, pollen tubes, developing embryos, developing seeds and germinating seeds.

It localises to the lipid droplet. Its subcellular location is the membrane. The enzyme catalyses 1,2-di-(9Z-octadecenoyl)-glycerol + (9Z)-octadecenoate + H(+) = 1,2,3-tri-(9Z-octadecenoyl)-glycerol + H2O. The catalysed reaction is 1-(9Z-octadecenoyl)-glycerol + H2O = glycerol + (9Z)-octadecenoate + H(+). Functionally, acid lipase that can hydrolyze a range of triacylglycerols without a clear preference for acyl-chains. Can also cleave 1,2-diacylglycerol, 1,3-diacylglycerol and 1-monoacylglycerol, but not phosphatidylcholine, phosphatidylethanolamine, or sterol esters. Required for pollen tube growth. Triacylglycerol hydrolysis by OBL1 may provide acyl groups for the synthesis of membrane lipids in growing pollen tubes. This Arabidopsis thaliana (Mouse-ear cress) protein is Triacylglycerol lipase OBL1.